The sequence spans 120 residues: Large ribosomal subunit protein bL19c (120 aa).

It belongs to the bacterial ribosomal protein bL19 family.

Its subcellular location is the plastid. The protein resides in the chloroplast. This Thalassiosira weissflogii (Marine diatom) protein is Large ribosomal subunit protein bL19c.